A 132-amino-acid chain; its full sequence is Ribonuclease VapC (132 aa).

In terms of domain architecture, PINc spans Tyr4–Val123. Positions 7 and 98 each coordinate Mg(2+).

It belongs to the PINc/VapC protein family. Probably forms a complex with cognate antitoxin VapB2. Mg(2+) serves as cofactor.

Its function is as follows. Toxic component of a type II toxin-antitoxin (TA) system. Acts as an RNase. Its toxic effect is neutralized by cognate antitoxin VapB2 but not by non-cognate antitoxin VapB1. This is Ribonuclease VapC from Haemophilus influenzae (strain 86-028NP).